The following is a 24-amino-acid chain: Calreticulin (24 aa).

Belongs to the calreticulin family. In terms of assembly, monomer. Component of an EIF2 complex at least composed of CELF1/CUGBP1, CALR, CALR3, EIF2S1, EIF2S2, HSP90B1 and HSPA5. Interacts with PDIA3/ERp57 and SPACA9. Interacts with TRIM21. Interacts with NR3C1. Interacts with PPIB. Interacts (via P-domain) with PDIA5. Interacts with CLCC1. Pancreas.

It localises to the endoplasmic reticulum lumen. It is found in the cytoplasm. The protein localises to the cytosol. Its subcellular location is the cytolytic granule. The protein resides in the secreted. It localises to the extracellular space. It is found in the extracellular matrix. The protein localises to the cell surface. Its subcellular location is the sarcoplasmic reticulum lumen. The protein resides in the cytoplasmic vesicle. It localises to the secretory vesicle. It is found in the cortical granule. Functionally, calcium-binding chaperone that promotes folding, oligomeric assembly and quality control in the endoplasmic reticulum (ER) via the calreticulin/calnexin cycle. This lectin interacts transiently with almost all of the monoglucosylated glycoproteins that are synthesized in the ER. Interacts with the DNA-binding domain of NR3C1 and mediates its nuclear export. Involved in maternal gene expression regulation. May participate in oocyte maturation via the regulation of calcium homeostasis. Present in the cortical granules of non-activated oocytes, is exocytosed during the cortical reaction in response to oocyte activation and might participate in the block to polyspermy. The protein is Calreticulin (CALR) of Canis lupus familiaris (Dog).